The primary structure comprises 275 residues: Large ribosomal subunit protein uL2 (275 aa).

Disordered stretches follow at residues 28–48 (KPYA…NNGR) and 223–275 (VVMN…RNKK).

The protein belongs to the universal ribosomal protein uL2 family. In terms of assembly, part of the 50S ribosomal subunit. Forms a bridge to the 30S subunit in the 70S ribosome.

One of the primary rRNA binding proteins. Required for association of the 30S and 50S subunits to form the 70S ribosome, for tRNA binding and peptide bond formation. It has been suggested to have peptidyltransferase activity; this is somewhat controversial. Makes several contacts with the 16S rRNA in the 70S ribosome. This is Large ribosomal subunit protein uL2 from Photobacterium profundum (strain SS9).